The primary structure comprises 433 residues: uncharacterized protein (433 aa).

The stretch at 258-304 forms a coiled coil; that stretch reads KNIKSKLLLELRQLKNNITNLQNKITKTMDNVKKIIEEIEQSKNKVT.

This sequence belongs to the mimivirus R160 family.

The protein localises to the virion. This is an uncharacterized protein from Acanthamoeba polyphaga mimivirus (APMV).